A 277-amino-acid polypeptide reads, in one-letter code: Small ribosomal subunit protein uS5 (277 aa).

The disordered stretch occupies residues 18-40; the sequence is AAGRPSWSWQRPGERARTPGRKA. The span at 29–40 shows a compositional bias: basic and acidic residues; the sequence is PGERARTPGRKA. Residues 87–150 form the S5 DRBM domain; the sequence is LKDEVLKIMP…ILAKLSIIPV (64 aa).

Belongs to the universal ribosomal protein uS5 family. In terms of assembly, component of the small ribosomal subunit.

It localises to the cytoplasm. Its subcellular location is the nucleus. The protein resides in the nucleolus. In terms of biological role, component of the ribosome, a large ribonucleoprotein complex responsible for the synthesis of proteins in the cell. The small ribosomal subunit (SSU) binds messenger RNAs (mRNAs) and translates the encoded message by selecting cognate aminoacyl-transfer RNA (tRNA) molecules. The large subunit (LSU) contains the ribosomal catalytic site termed the peptidyl transferase center (PTC), which catalyzes the formation of peptide bonds, thereby polymerizing the amino acids delivered by tRNAs into a polypeptide chain. The nascent polypeptides leave the ribosome through a tunnel in the LSU and interact with protein factors that function in enzymatic processing, targeting, and the membrane insertion of nascent chains at the exit of the ribosomal tunnel. Plays a role in the assembly and function of the 40S ribosomal subunit. Mutations in this protein affects the control of translational fidelity. Involved in nucleolar processing of pre-18S ribosomal RNA and ribosome assembly. The polypeptide is Small ribosomal subunit protein uS5 (rps2) (Ictalurus punctatus (Channel catfish)).